Consider the following 4911-residue polypeptide: Histone-lysine N-methyltransferase 2C (4911 aa).

The disordered stretch occupies residues 1-101 (MSSEEDKSVE…EDAEAEVDNS (101 aa)). Residues 12 to 28 (PQPPPPPPEEPGAPAPS) show a composition bias toward pro residues. Serine 28 and serine 46 each carry phosphoserine. The segment at residues 34–46 (KRPRGRPRKDGAS) is a DNA-binding region (a.T hook). Positions 50-59 (RARKKPRSRG) are enriched in basic residues. The span at 64 to 81 (EDEDSMDGLETTETETIV) shows a compositional bias: acidic residues. The residue at position 89 (serine 89) is a Phosphoserine. Positions 92 to 112 (EDAEAEVDNSKQLIPTLQRSV) form a coiled coil. Serine 113 is modified (phosphoserine). The interval 164–203 (RNQPSNKKDIDDNSNGTYEKMQNSAPRKQRGQRKERSPQQ) is disordered. Residues 176-189 (NSNGTYEKMQNSAP) show a composition bias toward polar residues. Serine 200 bears the Phosphoserine mark. A C2HC pre-PHD-type 1; degenerate zinc finger spans residues 227–262 (ELSLVGLPDAIDIQALFDSTGTCWAHHRCVEWSLGV). 4 consecutive PHD-type zinc fingers follow at residues 283-331 (ERCA…PEHI), 341-391 (DANC…CKVC), 388-438 (CKVC…CRIC), and 464-520 (DNLC…CKHL). The RING-type zinc finger occupies 344-389 (CAVCDSPGDLLDQFFCTTCGQHYHGMCLDIAVTPLKRAGWQCPECK). The DHHC domain occupies 436–489 (RICIECGTRSSSQWHHNCLICDNCYQQQDNLCPFCGKCYHPELQKDMLHCNMCK). A coiled-coil region spans residues 644-672 (EDKMEVTENIEVVTHQITVQQEQLQLLEE). The segment covering 721–730 (QGEKEQKENS) has biased composition (basic and acidic residues). The disordered stretch occupies residues 721-742 (QGEKEQKENSELSTGLMDSEMT). N6-acetyllysine is present on lysine 758. Residues 763 to 791 (SSETESSFSSSADISKADVSSSPTPSSDL) are compositionally biased toward low complexity. Disordered regions lie at residues 763–798 (SSET…DMLH), 828–864 (PAIT…DISE), and 885–912 (GRGS…RSKL). Basic residues predominate over residues 830-842 (ITKRKFSPGRPRS). The span at 845-856 (GAWSTHNTVSPP) shows a compositional bias: polar residues. Serine 854 carries the phosphoserine modification. PHD-type zinc fingers lie at residues 957–1010 (QDMC…CTVC), 1007–1057 (CTVC…CVWC), and 1084–1139 (LSSC…CRPY). A disordered region spans residues 1215–1324 (AVLQTPPDIQ…LPCRDDGWSE (110 aa)). Positions 1224 to 1270 (QSEHSRDGEMDDSREGELMDCDGKSESSPEREAVDDETKGVEGTDGV) are enriched in basic and acidic residues. A Phosphoserine modification is found at serine 1301. Residues 1338 to 1366 (TESTEKIKKRYRKRKNKLEETFPAYLQEA) are a coiled coil. Residues 1406–1416 (PSLDPLLSSSS) are compositionally biased toward low complexity. Disordered regions lie at residues 1406 to 1431 (PSLD…DDPL) and 1458 to 1485 (HSDI…PLSE). The segment covering 1467–1482 (DPSSLPQPNVNQSSRP) has biased composition (polar residues). Lysine 1508 carries the post-translational modification N6-acetyllysine. Disordered stretches follow at residues 1604-1630 (FNPM…DTMS) and 1709-2448 (VQMS…SPVA). 2 stretches are compositionally biased toward polar residues: residues 1610-1620 (DPNNSWTSSAP) and 1709-1727 (VQMS…SIDP). Positions 1729–1753 (SRIDSELFKDPLKQRESEHEQEWKF) are enriched in basic and acidic residues. The stretch at 1754–1787 (RQQMRQKSKQQAKIEATQKLEQVKNEQQQQQQQQ) forms a coiled coil. At lysine 1772 the chain carries N6-acetyllysine. A compositionally biased stretch (polar residues) spans 1788–1823 (FGSQHLLVQSGSDTPSSGIQSPLTPQPGNGNMSPAQ). Pro residues predominate over residues 1851-1860 (QAPPPPPAPS). Over residues 1861–1875 (RIPIQDSLSQAQTSQ) the composition is skewed to low complexity. Over residues 1927-1945 (TPLSSVSRPLQMNETTANR) the composition is skewed to polar residues. At serine 1987 the chain carries Phosphoserine. Residue lysine 2009 is modified to N6-acetyllysine. Polar residues-rich tracts occupy residues 2054–2065 (QDPYGSVSQASR), 2085–2094 (FSHNQSNDPY), 2115–2131 (AFSQ…QDPY), and 2144–2159 (SYSQ…TDPY). Low complexity predominate over residues 2173–2187 (PYSQQPQTPRPSTQT). 3 stretches are compositionally biased toward polar residues: residues 2302–2319 (SPMT…SQTA), 2335–2353 (CASS…SGVS), and 2362–2375 (SGVT…NMAQ). Positions 2377–2389 (DTEKLRQRQKLRE) are enriched in basic and acidic residues. Positions 2390–2399 (IILQQQQQKK) are enriched in low complexity. Residues arginine 2454 and arginine 2571 each carry the asymmetric dimethylarginine modification. 4 disordered regions span residues 2589-2694 (RHGN…SDDP), 2793-2887 (EPKK…RETA), 2925-2954 (EKSD…VSSL), and 2989-3029 (VNPG…SGPQ). 2 stretches are compositionally biased toward polar residues: residues 2629–2645 (PPSQ…SSMV) and 2661–2682 (PLST…TQPS). Basic and acidic residues predominate over residues 2793–2811 (EPKKKEQENKTLVLSDKHS). N6-acetyllysine occurs at positions 2802 and 2809. Polar residues predominate over residues 2814–2832 (KKSTVTNEVKTEVLSPNSK). The residue at position 2828 (serine 2828) is a Phosphoserine. Position 2832 is an N6-acetyllysine (lysine 2832). Residues 2833–2849 (VESKCETEKNDENKDNV) show a composition bias toward basic and acidic residues. A compositionally biased stretch (polar residues) spans 2851 to 2860 (TPCSQASAHS). Residues 2861–2884 (DLNDGEKTSLHPCDPDLFEKRTNR) are compositionally biased toward basic and acidic residues. Residue lysine 2867 is modified to N6-acetyllysine. Low complexity predominate over residues 3011-3029 (TQTGPQTSQSGTSSMSGPQ). Coiled coils occupy residues 3054–3081 (LLQD…QRSE), 3173–3272 (NDSQ…QQQQ), and 3391–3433 (FSES…EMEQ). Residues 3205–3221 (HRKSKKALSAKQRTAKK) show a composition bias toward basic residues. Disordered stretches follow at residues 3205 to 3241 (HRKS…TEQQ), 3353 to 3409 (PPIA…EQQE), 3527 to 3583 (PNFS…HSYP), 3596 to 3919 (IIPE…MANG), and 4024 to 4053 (VKEE…SRRN). Composition is skewed to basic and acidic residues over residues 3222 to 3238 (AGRE…KHVT) and 3395 to 3409 (FQER…EQQE). Polar residues-rich tracts occupy residues 3527–3549 (PNFS…QSPV), 3564–3583 (ANSS…HSYP), 3637–3658 (ISET…QADQ), and 3684–3701 (LPNS…TYAN). Residues 3703–3725 (EVDKLSMETPAKTEEIKLEKAET) show a composition bias toward basic and acidic residues. Lysine 3714 carries the post-translational modification N6-acetyllysine. Serine 3758 bears the Phosphoserine mark. The segment covering 3803-3812 (DCTKDNKLVE) has biased composition (basic and acidic residues). The segment covering 3878 to 3892 (MYSSTDTFTHLKQQN) has biased composition (polar residues). Pro residues predominate over residues 3897–3911 (PPTPPASLPPTPPPM). Serine 4034 is subject to Phosphoserine. Arginine 4139 carries the asymmetric dimethylarginine modification. Serine 4267 carries the phosphoserine modification. The C2HC pre-PHD-type 2 zinc finger occupies 4399–4439 (YRKCCFCHEEGDGLTDGPARLLNLDLDLWVHLNCALWSTEV). Residues 4460-4507 (MKCVFCHKTGATSGCHRFRCTNIYHFTCAIKAQCMFFKDKTMLCPMHK) form a PHD-type 8 zinc finger. The region spanning 4545 to 4605 (DHTFRVGSLI…CRYLCSIEEK (61 aa)) is the FYR N-terminal domain. Residues 4606–4691 (DGRPVFVIRI…EACENYTFRY (86 aa)) enclose the FYR C-terminal domain. Positions 4707–4712 (GCARSE) match the WDR5 interaction motif (WIN) motif. The SET domain occupies 4771–4887 (SNVYLARSRI…KGEELCYDYK (117 aa)). Residues tyrosine 4825 and 4848–4849 (NH) contribute to the S-adenosyl-L-methionine site. Residues cysteine 4851, cysteine 4899, cysteine 4901, and cysteine 4906 each coordinate Zn(2+). The region spanning 4895–4911 (HKIPCHCGAVNCRKWMN) is the Post-SET domain.

It belongs to the class V-like SAM-binding methyltransferase superfamily. Histone-lysine methyltransferase family. TRX/MLL subfamily. Component of the MLL3 complex (also named ASCOM complex), at least composed of catalytic subunit KMT2C/MLL3, ASH2L, RBBP5, WDR5, NCOA6, DPY30, KDM6A, PAXIP1/PTIP, PAGR1 and alpha- and beta-tubulin. Forms a core complex with the evolutionary conserved subcomplex WRAD composed of WDR5, RBBP5, ASH2L/ASH2 and DPY30 subunits; WRAD differentially stimulates the methyltransferase activity. Interacts (via WIN motif) with WDR5. As to expression, highly expressed in testis and ovary, followed by brain and liver. Also expressed in placenta, peripherical blood, fetal thymus, heart, lung and kidney. Within brain, expression was highest in hippocampus, caudate nucleus, and substantia nigra. Not detected in skeletal muscle and fetal liver.

It localises to the nucleus. The catalysed reaction is L-lysyl(4)-[histone H3] + S-adenosyl-L-methionine = N(6)-methyl-L-lysyl(4)-[histone H3] + S-adenosyl-L-homocysteine + H(+). In terms of biological role, histone methyltransferase that catalyzes methyl group transfer from S-adenosyl-L-methionine to the epsilon-amino group of 'Lys-4' of histone H3 (H3K4). Part of chromatin remodeling machinery predominantly forms H3K4me1 methylation marks at active chromatin sites where transcription and DNA repair take place. Likely plays a redundant role with KMT2D in enriching H3K4me1 mark on primed and active enhancer elements. This chain is Histone-lysine N-methyltransferase 2C (KMT2C), found in Homo sapiens (Human).